The following is a 235-amino-acid chain: tRNA (guanine-N(1)-)-methyltransferase (235 aa).

S-adenosyl-L-methionine-binding positions include G112 and 132-137 (IGDYVL).

Belongs to the RNA methyltransferase TrmD family. In terms of assembly, homodimer.

It localises to the cytoplasm. It carries out the reaction guanosine(37) in tRNA + S-adenosyl-L-methionine = N(1)-methylguanosine(37) in tRNA + S-adenosyl-L-homocysteine + H(+). Functionally, specifically methylates guanosine-37 in various tRNAs. This is tRNA (guanine-N(1)-)-methyltransferase from Cytophaga hutchinsonii (strain ATCC 33406 / DSM 1761 / CIP 103989 / NBRC 15051 / NCIMB 9469 / D465).